A 126-amino-acid chain; its full sequence is Holo-[acyl-carrier-protein] synthase (126 aa).

Mg(2+)-binding residues include Asp-8 and Glu-56.

Belongs to the P-Pant transferase superfamily. AcpS family. Mg(2+) is required as a cofactor.

It is found in the cytoplasm. It catalyses the reaction apo-[ACP] + CoA = holo-[ACP] + adenosine 3',5'-bisphosphate + H(+). Transfers the 4'-phosphopantetheine moiety from coenzyme A to a Ser of acyl-carrier-protein. This Clostridium tetani (strain Massachusetts / E88) protein is Holo-[acyl-carrier-protein] synthase.